Here is a 221-residue protein sequence, read N- to C-terminus: Guanylate kinase (221 aa).

The Guanylate kinase-like domain occupies 20-199 (GLMFILSSPS…CFGKVREILA (180 aa)). 27–34 (SPSGAGKT) is an ATP binding site.

This sequence belongs to the guanylate kinase family.

The protein localises to the cytoplasm. The catalysed reaction is GMP + ATP = GDP + ADP. Functionally, essential for recycling GMP and indirectly, cGMP. The protein is Guanylate kinase of Novosphingobium aromaticivorans (strain ATCC 700278 / DSM 12444 / CCUG 56034 / CIP 105152 / NBRC 16084 / F199).